The primary structure comprises 206 residues: Probable chemoreceptor glutamine deamidase CheD (206 aa).

The protein belongs to the CheD family.

The catalysed reaction is L-glutaminyl-[protein] + H2O = L-glutamyl-[protein] + NH4(+). In terms of biological role, probably deamidates glutamine residues to glutamate on methyl-accepting chemotaxis receptors (MCPs), playing an important role in chemotaxis. This Laribacter hongkongensis (strain HLHK9) protein is Probable chemoreceptor glutamine deamidase CheD.